Consider the following 359-residue polypeptide: tRNA N6-adenosine threonylcarbamoyltransferase (359 aa).

Fe cation is bound by residues H115 and H119. Substrate is bound by residues 137–141, D170, G183, and N283; that span reads LVSGG. Fe cation is bound at residue D311. Residues 328–359 form a disordered region; sequence APDSLDLAPRSRWPLDEKSAPLIGTGRRGAKA.

It belongs to the KAE1 / TsaD family. Fe(2+) serves as cofactor.

The protein localises to the cytoplasm. It carries out the reaction L-threonylcarbamoyladenylate + adenosine(37) in tRNA = N(6)-L-threonylcarbamoyladenosine(37) in tRNA + AMP + H(+). In terms of biological role, required for the formation of a threonylcarbamoyl group on adenosine at position 37 (t(6)A37) in tRNAs that read codons beginning with adenine. Is involved in the transfer of the threonylcarbamoyl moiety of threonylcarbamoyl-AMP (TC-AMP) to the N6 group of A37, together with TsaE and TsaB. TsaD likely plays a direct catalytic role in this reaction. This Brucella anthropi (strain ATCC 49188 / DSM 6882 / CCUG 24695 / JCM 21032 / LMG 3331 / NBRC 15819 / NCTC 12168 / Alc 37) (Ochrobactrum anthropi) protein is tRNA N6-adenosine threonylcarbamoyltransferase.